A 392-amino-acid chain; its full sequence is Copper-containing nitrite reductase (392 aa).

An N-terminal signal peptide occupies residues methionine 1–alanine 18. Residue cysteine 19 is the site of N-palmitoyl cysteine attachment. The S-diacylglycerol cysteine moiety is linked to residue cysteine 19. Positions glutamate 30–threonine 49 are disordered. 2 Plastocyanin-like domains span residues tryptophan 101–glutamate 195 and glycine 245–glutamate 346. 6 residues coordinate Cu cation: histidine 134, histidine 139, histidine 174, cysteine 175, histidine 183, and methionine 188. Residue histidine 139 participates in substrate binding. Histidine 280 contacts substrate. Residue histidine 329 participates in Cu cation binding. The interval glycine 367–tyrosine 392 is disordered. A run of 4 repeats spans residues alanine 368 to proline 372, alanine 373 to proline 377, alanine 378 to proline 382, and alanine 383 to serine 387. Residues alanine 368–serine 387 are 4 X 5 AA tandem repeats of A-A-S-A-P.

It belongs to the multicopper oxidase family. In terms of assembly, homotrimer. Cu(+) serves as cofactor. Cu(2+) is required as a cofactor. In terms of processing, palmitoylated.

The protein localises to the cell outer membrane. It catalyses the reaction nitric oxide + Fe(III)-[cytochrome c] + H2O = Fe(II)-[cytochrome c] + nitrite + 2 H(+). Catalyzes the reduction of nitrite to nitric oxide (NO), probably with azurin as electron donor. Essential for growth and survival in oxygen-depleted environments. Can also provide protection against killing by normal human sera. The protein is Copper-containing nitrite reductase (aniA) of Neisseria gonorrhoeae.